The following is a 212-amino-acid chain: Uridine kinase (212 aa).

13 to 20 (GGSGSGKT) contributes to the ATP binding site.

This sequence belongs to the uridine kinase family.

Its subcellular location is the cytoplasm. The enzyme catalyses uridine + ATP = UMP + ADP + H(+). It carries out the reaction cytidine + ATP = CMP + ADP + H(+). It functions in the pathway pyrimidine metabolism; CTP biosynthesis via salvage pathway; CTP from cytidine: step 1/3. Its pathway is pyrimidine metabolism; UMP biosynthesis via salvage pathway; UMP from uridine: step 1/1. The chain is Uridine kinase from Bacillus cereus (strain G9842).